Here is a 251-residue protein sequence, read N- to C-terminus: 1-(5-phosphoribosyl)-5-[(5-phosphoribosylamino)methylideneamino] imidazole-4-carboxamide isomerase (251 aa).

Asp-8 (proton acceptor) is an active-site residue. Asp-131 acts as the Proton donor in catalysis.

Belongs to the HisA/HisF family.

The protein localises to the cytoplasm. It carries out the reaction 1-(5-phospho-beta-D-ribosyl)-5-[(5-phospho-beta-D-ribosylamino)methylideneamino]imidazole-4-carboxamide = 5-[(5-phospho-1-deoxy-D-ribulos-1-ylimino)methylamino]-1-(5-phospho-beta-D-ribosyl)imidazole-4-carboxamide. It functions in the pathway amino-acid biosynthesis; L-histidine biosynthesis; L-histidine from 5-phospho-alpha-D-ribose 1-diphosphate: step 4/9. The chain is 1-(5-phosphoribosyl)-5-[(5-phosphoribosylamino)methylideneamino] imidazole-4-carboxamide isomerase from Burkholderia cenocepacia (strain ATCC BAA-245 / DSM 16553 / LMG 16656 / NCTC 13227 / J2315 / CF5610) (Burkholderia cepacia (strain J2315)).